The sequence spans 222 residues: N-(5'-phosphoribosyl)anthranilate isomerase (222 aa).

This sequence belongs to the TrpF family.

It catalyses the reaction N-(5-phospho-beta-D-ribosyl)anthranilate = 1-(2-carboxyphenylamino)-1-deoxy-D-ribulose 5-phosphate. It participates in amino-acid biosynthesis; L-tryptophan biosynthesis; L-tryptophan from chorismate: step 3/5. This is N-(5'-phosphoribosyl)anthranilate isomerase from Gloeobacter violaceus (strain ATCC 29082 / PCC 7421).